The sequence spans 434 residues: D-amino acid dehydrogenase (434 aa).

FAD is bound at residue 3-17 (VIVLGSGVIGTTTAY).

This sequence belongs to the DadA oxidoreductase family. FAD is required as a cofactor.

It carries out the reaction a D-alpha-amino acid + A + H2O = a 2-oxocarboxylate + AH2 + NH4(+). Its pathway is amino-acid degradation; D-alanine degradation; NH(3) and pyruvate from D-alanine: step 1/1. Its function is as follows. Oxidative deamination of D-amino acids. This Bordetella petrii (strain ATCC BAA-461 / DSM 12804 / CCUG 43448) protein is D-amino acid dehydrogenase.